We begin with the raw amino-acid sequence, 425 residues long: RNA polymerase sigma factor SigA (425 aa).

Positions 193–263 are sigma-70 factor domain-2; the sequence is MVQSNLRLVV…TRAIADQSRT (71 aa). The short motif at 217–220 is the Interaction with polymerase core subunit RpoC element; the sequence is DLIQ. The sigma-70 factor domain-3 stretch occupies residues 272–347; the sequence is ETISRIKKTT…EADGETPEDE (76 aa). The tract at residues 360–413 is sigma-70 factor domain-4; it reads VLDTLSPRERDVLRLRYGLDDGRMKTLEEIGQIFNVTRERIRQIEAKALRKLRH. The H-T-H motif DNA-binding region spans 386–405; the sequence is LEEIGQIFNVTRERIRQIEA.

It belongs to the sigma-70 factor family. RpoD/SigA subfamily. Interacts transiently with the RNA polymerase catalytic core.

It is found in the cytoplasm. Its function is as follows. Sigma factors are initiation factors that promote the attachment of RNA polymerase to specific initiation sites and are then released. This sigma factor is the primary sigma factor during exponential growth. The polypeptide is RNA polymerase sigma factor SigA (Synechocystis sp. (strain ATCC 27184 / PCC 6803 / Kazusa)).